A 318-amino-acid polypeptide reads, in one-letter code: UDP-N-acetylenolpyruvoylglucosamine reductase (318 aa).

Positions isoleucine 38–glycine 204 constitute an FAD-binding PCMH-type domain. Residue arginine 182 is part of the active site. The span at serine 212–lysine 229 shows a compositional bias: basic and acidic residues. The disordered stretch occupies residues serine 212–glycine 232. The active-site Proton donor is the serine 233. Residue glutamate 310 is part of the active site.

It belongs to the MurB family. It depends on FAD as a cofactor.

It localises to the cytoplasm. The enzyme catalyses UDP-N-acetyl-alpha-D-muramate + NADP(+) = UDP-N-acetyl-3-O-(1-carboxyvinyl)-alpha-D-glucosamine + NADPH + H(+). It participates in cell wall biogenesis; peptidoglycan biosynthesis. In terms of biological role, cell wall formation. This chain is UDP-N-acetylenolpyruvoylglucosamine reductase, found in Leptospira interrogans serogroup Icterohaemorrhagiae serovar Lai (strain 56601).